A 297-amino-acid polypeptide reads, in one-letter code: Succinate dehydrogenase [ubiquinone] iron-sulfur subunit, mitochondrial (297 aa).

Residues 33-55 are disordered; the sequence is TAEALSASRPPIKETKTSTVKEP. Residues 78 to 157 form the 2Fe-2S ferredoxin-type domain; it reads DKPRMQSYTL…ETRIYPLPHT (80 aa). The [2Fe-2S] cluster site is built by C117, C122, C125, and C137. Positions 199–229 constitute a 4Fe-4S ferredoxin-type domain; the sequence is DRKKLDGLYECILCACCSTSCPSYWWNSEEY. 3 residues coordinate [4Fe-4S] cluster: C209, C212, and C215. C219 contributes to the [3Fe-4S] cluster binding site. W224 contributes to the a ubiquinone binding site. Positions 266 and 272 each coordinate [3Fe-4S] cluster. Residue C276 coordinates [4Fe-4S] cluster.

It belongs to the succinate dehydrogenase/fumarate reductase iron-sulfur protein family. As to quaternary structure, component of complex II composed of four subunits: a flavoprotein (FP), an iron-sulfur protein (IP), and a cytochrome b composed of a large and a small subunit. Requires [2Fe-2S] cluster as cofactor. [3Fe-4S] cluster is required as a cofactor. The cofactor is [4Fe-4S] cluster.

The protein resides in the mitochondrion inner membrane. It catalyses the reaction a quinone + succinate = fumarate + a quinol. The protein operates within carbohydrate metabolism; tricarboxylic acid cycle; fumarate from succinate (eukaryal route): step 1/1. Its function is as follows. Iron-sulfur protein (IP) subunit of succinate dehydrogenase (SDH) that is involved in complex II of the mitochondrial electron transport chain and is responsible for transferring electrons from succinate to ubiquinone (coenzyme Q). This Zymoseptoria tritici (Speckled leaf blotch fungus) protein is Succinate dehydrogenase [ubiquinone] iron-sulfur subunit, mitochondrial (SDH2).